An 806-amino-acid polypeptide reads, in one-letter code: Acetyl-CoA decarbonylase/synthase complex subunit alpha 1 (806 aa).

The [4Fe-4S] cluster site is built by C73, C76, C77, C79, C84, and C94. Residue H117 participates in CO binding. H250, C278, and C323 together coordinate [Ni-4Fe-4S] cluster. 2 consecutive 4Fe-4S ferredoxin-type domains span residues 407–436 (DEEF…IPEA) and 446–475 (SYLD…LNII). The [4Fe-4S] cluster site is built by C417, C420, C423, C427, C455, C458, C461, and C465. C523, C552, and C587 together coordinate [Ni-4Fe-4S] cluster.

It belongs to the Ni-containing carbon monoxide dehydrogenase family. In terms of assembly, heterotetramer of two alpha and two epsilon subunits. The ACDS complex is made up of alpha, epsilon, beta, gamma and delta subunits with a probable stoichiometry of (alpha(2)epsilon(2))(4)-beta(8)-(gamma(1)delta(1))(8). [4Fe-4S] cluster is required as a cofactor. Requires [Ni-4Fe-4S] cluster as cofactor.

The enzyme catalyses CO + 2 oxidized [2Fe-2S]-[ferredoxin] + H2O = 2 reduced [2Fe-2S]-[ferredoxin] + CO2 + 2 H(+). The protein operates within one-carbon metabolism; methanogenesis from acetate. Its activity is regulated as follows. Carbon monoxide dehydrogenase activity is inhibited by KCN and is rapidly inactivated by O(2). Part of the ACDS complex that catalyzes the reversible cleavage of acetyl-CoA, allowing growth on acetate as sole source of carbon and energy. The alpha-epsilon subcomponent functions as a carbon monoxide dehydrogenase. The protein is Acetyl-CoA decarbonylase/synthase complex subunit alpha 1 of Methanosarcina barkeri (strain Fusaro / DSM 804).